The following is a 710-amino-acid chain: Polyribonucleotide nucleotidyltransferase (710 aa).

Mg(2+)-binding residues include Asp-489 and Asp-495. A KH domain is found at 556-615 (PKIDTIKIDVDKIKVVIGKGGETIDKIIAETGVKIDIDDEGNVSIYSSDQAAIDRTKEII). An S1 motif domain is found at 625–693 (GEVYHAKVIR…EKGRVDASMK (69 aa)).

Belongs to the polyribonucleotide nucleotidyltransferase family. Mg(2+) is required as a cofactor.

The protein resides in the cytoplasm. It catalyses the reaction RNA(n+1) + phosphate = RNA(n) + a ribonucleoside 5'-diphosphate. Functionally, involved in mRNA degradation. Catalyzes the phosphorolysis of single-stranded polyribonucleotides processively in the 3'- to 5'-direction. This Streptococcus pyogenes serotype M3 (strain ATCC BAA-595 / MGAS315) protein is Polyribonucleotide nucleotidyltransferase.